The following is a 261-amino-acid chain: 5'-nucleotidase SurE (261 aa).

A divalent metal cation-binding residues include aspartate 12, aspartate 13, serine 43, and asparagine 99.

The protein belongs to the SurE nucleotidase family. A divalent metal cation serves as cofactor.

It localises to the cytoplasm. The enzyme catalyses a ribonucleoside 5'-phosphate + H2O = a ribonucleoside + phosphate. In terms of biological role, nucleotidase that shows phosphatase activity on nucleoside 5'-monophosphates. This chain is 5'-nucleotidase SurE, found in Polynucleobacter asymbioticus (strain DSM 18221 / CIP 109841 / QLW-P1DMWA-1) (Polynucleobacter necessarius subsp. asymbioticus).